The primary structure comprises 231 residues: Insertion sequence IS1162 putative ATP-binding protein (231 aa).

107 to 114 contributes to the ATP binding site; that stretch reads GPTGVGKT.

This sequence belongs to the IS21/IS1162 putative ATP-binding protein family.

The polypeptide is Insertion sequence IS1162 putative ATP-binding protein (Pseudomonas fluorescens).